A 318-amino-acid chain; its full sequence is MANTLEQLKSYTTIVADTGDIEAIKRYQPEDATTNPSLILKAAQIPEYSYLIDNAIAWAQTQSTELEQQIDDASDKLAVNIGVEILKLVPGRISTEVDARLSFDKEKSIAKAHKLVRLYQEAGIDKSRILIKLASTWEGICAAKELEQEGINCNLTLLFSFAQARACAEAGVYLISPFVGRILDWYKKDTGKDYAPANDPGVVSVTEIYNYYKQHGYNTVVMGASFRNIGEIIELAGCDRLTIGPSLLEELANSQAQIQAKLLPATTTVAAETPLTEAQFRWDFNQDPMAVEKLAEGIRNFAIDQGKLEVMLKAKLSN.

Lys132 acts as the Schiff-base intermediate with substrate in catalysis.

Belongs to the transaldolase family. Type 1 subfamily. Homodimer.

It localises to the cytoplasm. The catalysed reaction is D-sedoheptulose 7-phosphate + D-glyceraldehyde 3-phosphate = D-erythrose 4-phosphate + beta-D-fructose 6-phosphate. It functions in the pathway carbohydrate degradation; pentose phosphate pathway; D-glyceraldehyde 3-phosphate and beta-D-fructose 6-phosphate from D-ribose 5-phosphate and D-xylulose 5-phosphate (non-oxidative stage): step 2/3. Functionally, transaldolase is important for the balance of metabolites in the pentose-phosphate pathway. This is Transaldolase from Shewanella putrefaciens (strain CN-32 / ATCC BAA-453).